The sequence spans 68 residues: DNA-directed RNA polymerase subunit omega (68 aa).

Belongs to the RNA polymerase subunit omega family. In terms of assembly, the RNAP catalytic core consists of 2 alpha, 1 beta, 1 beta' and 1 omega subunit. When a sigma factor is associated with the core the holoenzyme is formed, which can initiate transcription.

The catalysed reaction is RNA(n) + a ribonucleoside 5'-triphosphate = RNA(n+1) + diphosphate. Its function is as follows. Promotes RNA polymerase assembly. Latches the N- and C-terminal regions of the beta' subunit thereby facilitating its interaction with the beta and alpha subunits. The polypeptide is DNA-directed RNA polymerase subunit omega (Nitrosospira multiformis (strain ATCC 25196 / NCIMB 11849 / C 71)).